The following is a 605-amino-acid chain: Elongation factor 4 (605 aa).

Residues 11 to 193 (KRIRNFSIIA…QIVTRISPPQ (183 aa)) enclose the tr-type G domain. GTP contacts are provided by residues 23-28 (DHGKST) and 140-143 (NKVD).

This sequence belongs to the TRAFAC class translation factor GTPase superfamily. Classic translation factor GTPase family. LepA subfamily.

It localises to the cell membrane. The enzyme catalyses GTP + H2O = GDP + phosphate + H(+). Its function is as follows. Required for accurate and efficient protein synthesis under certain stress conditions. May act as a fidelity factor of the translation reaction, by catalyzing a one-codon backward translocation of tRNAs on improperly translocated ribosomes. Back-translocation proceeds from a post-translocation (POST) complex to a pre-translocation (PRE) complex, thus giving elongation factor G a second chance to translocate the tRNAs correctly. Binds to ribosomes in a GTP-dependent manner. This Onion yellows phytoplasma (strain OY-M) protein is Elongation factor 4.